We begin with the raw amino-acid sequence, 275 residues long: Echotoxin-2 (275 aa).

Residues 1-23 form the signal peptide; sequence MKRNILALVVVVALISQSRPAES. Residues 23–32 are plays an important role in the hemolytic activity; it reads SAGGTIIATL. The N-terminal region stretch occupies residues 49–67; sequence ETGASVASAAAAATSSDYS. The phosphocholine site is built by glycine 123, serine 141, proline 143, tyrosine 176, and tyrosine 177. A trp-rich region, which is important for the binding to lipid membrane region spans residues 141 to 156; that stretch reads SAPYNFDFYSNWLAVG. Residues 249-275 constitute a propeptide that is removed on maturation; that stretch reads RAIQQELARRAEEEKQRKRKALDEMLK.

The protein belongs to the actinoporin family. Sea anemone subfamily. As to quaternary structure, octamer or nonamer in membranes. Monomer in the soluble state. In terms of tissue distribution, salivary gland.

The protein resides in the secreted. It is found in the nematocyst. The protein localises to the target cell membrane. Functionally, pore-forming protein that forms cations-selective hydrophilic pores of around 1 nm and causes cardiac stimulation and cytolysis. Pore formation is a multi-step process that involves specific recognition of membrane sphingomyelin (but neither cholesterol nor phosphatidylcholine) using aromatic rich region and adjacent phosphocholine (POC) binding site, firm binding to the membrane (mainly driven by hydrophobic interactions) accompanied by the transfer of the N-terminal region to the lipid-water interface and finally pore formation after oligomerization of monomers. Exhibits both hemolytic and lethal activities. Gangliosides potently inhibits the hemolytic activity. In Monoplex parthenopeus (Giant triton), this protein is Echotoxin-2.